Reading from the N-terminus, the 117-residue chain is Ribonuclease P protein component (117 aa).

Belongs to the RnpA family. Consists of a catalytic RNA component (M1 or rnpB) and a protein subunit.

The catalysed reaction is Endonucleolytic cleavage of RNA, removing 5'-extranucleotides from tRNA precursor.. RNaseP catalyzes the removal of the 5'-leader sequence from pre-tRNA to produce the mature 5'-terminus. It can also cleave other RNA substrates such as 4.5S RNA. The protein component plays an auxiliary but essential role in vivo by binding to the 5'-leader sequence and broadening the substrate specificity of the ribozyme. This is Ribonuclease P protein component from Aliivibrio salmonicida (strain LFI1238) (Vibrio salmonicida (strain LFI1238)).